We begin with the raw amino-acid sequence, 569 residues long: Ribonuclease J (569 aa).

His-81, His-83, Asp-85, His-86, His-150, and Asp-172 together coordinate Zn(2+). 373 to 377 (HASGH) serves as a coordination point for substrate. His-399 serves as a coordination point for Zn(2+).

Belongs to the metallo-beta-lactamase superfamily. RNA-metabolizing metallo-beta-lactamase-like family. Bacterial RNase J subfamily. In terms of assembly, homodimer, may be a subunit of the RNA degradosome. Zn(2+) serves as cofactor.

The protein resides in the cytoplasm. An RNase that has 5'-3' exonuclease and possibly endoonuclease activity. Involved in maturation of rRNA and in some organisms also mRNA maturation and/or decay. The chain is Ribonuclease J from Mycoplasma pneumoniae (strain ATCC 29342 / M129 / Subtype 1) (Mycoplasmoides pneumoniae).